A 224-amino-acid chain; its full sequence is RNA-free ribonuclease P (224 aa).

The protein belongs to the HARP family.

The catalysed reaction is Endonucleolytic cleavage of RNA, removing 5'-extranucleotides from tRNA precursor.. Its function is as follows. RNA-free RNase P that catalyzes the removal of the 5'-leader sequence from pre-tRNA to produce the mature 5'-terminus. The protein is RNA-free ribonuclease P of Haloarcula marismortui (strain ATCC 43049 / DSM 3752 / JCM 8966 / VKM B-1809) (Halobacterium marismortui).